The chain runs to 138 residues: MTATNQKVAHMKKAIATAAIALAAGLGLVGCTSDADVASENLSKAADNFEIPRRIVFFNGITDKYLLEIQGRCSIEPDTGAQKLDVTCKQNGQFKKHFLGLSDNVTYFVEQIEGANVSDDFYQVNFKPQSILPDIELR.

In Mycobacterium (Mycobacteriophage D29), this protein is Gene 64 protein (64).